Here is a 370-residue protein sequence, read N- to C-terminus: Cytochrome b (370 aa).

Helical transmembrane passes span 30–50 (FGSM…FLAF), 74–96 (WIFR…LHIF), 109–129 (VWMS…MGYV), and 175–195 (FFVL…GHLI). Heme b contacts are provided by His80 and His94. Heme b is bound by residues His179 and His193. Residue His198 participates in a ubiquinone binding. A run of 4 helical transmembrane segments spans residues 221–240 (YIGK…VLSL), 284–304 (VLGV…ALVN), 316–336 (FLVF…QCMV), and 342–362 (VLSP…LGIF).

This sequence belongs to the cytochrome b family. As to quaternary structure, the main subunits of complex b-c1 are: cytochrome b, cytochrome c1 and the Rieske protein. Heme b is required as a cofactor.

It localises to the mitochondrion inner membrane. In terms of biological role, component of the ubiquinol-cytochrome c reductase complex (complex III or cytochrome b-c1 complex) that is part of the mitochondrial respiratory chain. The b-c1 complex mediates electron transfer from ubiquinol to cytochrome c. Contributes to the generation of a proton gradient across the mitochondrial membrane that is then used for ATP synthesis. This chain is Cytochrome b (ctb-1), found in Caenorhabditis briggsae.